The sequence spans 241 residues: Ribonuclease PH (241 aa).

Phosphate contacts are provided by residues Arg-89 and 127–129 (GTR).

This sequence belongs to the RNase PH family. Homohexameric ring arranged as a trimer of dimers.

The enzyme catalyses tRNA(n+1) + phosphate = tRNA(n) + a ribonucleoside 5'-diphosphate. Phosphorolytic 3'-5' exoribonuclease that plays an important role in tRNA 3'-end maturation. Removes nucleotide residues following the 3'-CCA terminus of tRNAs; can also add nucleotides to the ends of RNA molecules by using nucleoside diphosphates as substrates, but this may not be physiologically important. Probably plays a role in initiation of 16S rRNA degradation (leading to ribosome degradation) during starvation. In Xanthomonas euvesicatoria pv. vesicatoria (strain 85-10) (Xanthomonas campestris pv. vesicatoria), this protein is Ribonuclease PH.